A 1444-amino-acid polypeptide reads, in one-letter code: Adhesin P1 (1444 aa).

Positions 1 to 30 (MHQPKKRLAKKSWAFLTAALTLGVITGVGG) are cleaved as a signal peptide. Disordered stretches follow at residues 231 to 283 (QSSF…EVER), 845 to 885 (IPFE…ALPN), and 927 to 949 (GDSNDQFNKDSEQKWDKTETNEG). The segment covering 240–257 (LQKDSPVKDSSKQGEKLS) has biased composition (basic and acidic residues). Over residues 258-272 (ETTASSMSSGMATST) the composition is skewed to low complexity. Polar residues-rich tracts occupy residues 851–860 (KPSNNSTPFD) and 868–878 (VTPSGGSSKPT). Residues 933–946 (FNKDSEQKWDKTET) show a composition bias toward basic and acidic residues. The helical transmembrane segment at 1353-1373 (VLPLIVTVPIVVIILSVTLGL) threads the bilayer. Positions 1419-1444 (NAPKKLKQATPTKPTPKTPPKPPVKQ) are disordered. Positions 1431-1444 (KPTPKTPPKPPVKQ) are enriched in pro residues.

It belongs to the adhesin P1 family.

It localises to the cell membrane. The protein is the major adhesin mediating the attachment of this mycoplasma to the ciliated epithelium. The polypeptide is Adhesin P1 (mgpA) (Mycoplasma genitalium (strain ATCC 33530 / DSM 19775 / NCTC 10195 / G37) (Mycoplasmoides genitalium)).